A 553-amino-acid polypeptide reads, in one-letter code: MKYTRYALLFSLFYALYYLIPLELRALWQPDEVRYAEISREMLVNGNWVVPHFLDLRYFEKPIAGYWINNIGQWLFGSNNFAVRIGSVFSITLSALLVYWLALRLWQQRSTALLSAVVFLTCLLVYGVGSYAVLDPMVTLWLVAAMCSFWLAAQSASRLQKVSGWLLLGLACGMGLMTKGFLALAVPVVAIVPWMIWQRRFKELLLFGPLALVSAALITAPWAISIARQEPDFWHYFFWVEHIQRFAQSDAQHKAPFWYYLPMLLAGALPWVGLLPGALQRAWRERSENSGSLYLLCWTVMPLLFFSLAKGKLPTYILPCFAPLAILLAHHGIKIAGTGSKALKANALINVAFGVIAALAVILVLAPWGLVHHPLYAKSEISKVLLGASAFLFWAAVGLACLVAGAKHWRLAALCPLGLALLAGAVIPDKVIDSKQPQSFISAVDNTLKHSRFVLANEVGLASTLAWELKRSDIQLFDRHGELEYGLSYPDAKGRFINLNDFSRWLSEHRREGSVSLVMKLSDDDQYIDERIPVPDQKYHRGRLVLWYYSQQP.

The next 12 membrane-spanning stretches (helical) occupy residues 8-28 (LLFS…RALW), 81-101 (FAVR…VYWL), 113-133 (LLSA…SYAV), 136-156 (PMVT…AQSA), 176-196 (LMTK…PWMI), 204-224 (LLLF…PWAI), 255-275 (APFW…VGLL), 289-309 (NSGS…FSLA), 313-333 (LPTY…HHGI), 351-371 (VAFG…WGLV), 384-404 (VLLG…CLVA), and 412-432 (AALC…DKVI).

It belongs to the glycosyltransferase 83 family.

The protein resides in the cell inner membrane. The enzyme catalyses 4-amino-4-deoxy-alpha-L-arabinopyranosyl di-trans,octa-cis-undecaprenyl phosphate + lipid IVA = lipid IIA + di-trans,octa-cis-undecaprenyl phosphate.. It functions in the pathway lipopolysaccharide metabolism; 4-amino-4-deoxy-beta-L-arabinose-lipid A biosynthesis. In terms of biological role, catalyzes the transfer of the L-Ara4N moiety of the glycolipid undecaprenyl phosphate-alpha-L-Ara4N to lipid A. The modified arabinose is attached to lipid A and is required for resistance to polymyxin and cationic antimicrobial peptides. This is Undecaprenyl phosphate-alpha-4-amino-4-deoxy-L-arabinose arabinosyl transferase from Erwinia tasmaniensis (strain DSM 17950 / CFBP 7177 / CIP 109463 / NCPPB 4357 / Et1/99).